A 25-amino-acid chain; its full sequence is Caerin-1.10 (25 aa).

Leu25 bears the Leucine amide mark.

The protein belongs to the frog skin active peptide (FSAP) family. Caerin subfamily. Expressed by the skin dorsal glands.

It localises to the secreted. Antibacterial peptide with wide spectrum of activity. This chain is Caerin-1.10, found in Litoria rothii (Roth's tree frog).